A 257-amino-acid polypeptide reads, in one-letter code: Imidazole glycerol phosphate synthase subunit HisF (257 aa).

Residues D12 and D131 contribute to the active site.

Belongs to the HisA/HisF family. In terms of assembly, heterodimer of HisH and HisF.

It is found in the cytoplasm. It carries out the reaction 5-[(5-phospho-1-deoxy-D-ribulos-1-ylimino)methylamino]-1-(5-phospho-beta-D-ribosyl)imidazole-4-carboxamide + L-glutamine = D-erythro-1-(imidazol-4-yl)glycerol 3-phosphate + 5-amino-1-(5-phospho-beta-D-ribosyl)imidazole-4-carboxamide + L-glutamate + H(+). The protein operates within amino-acid biosynthesis; L-histidine biosynthesis; L-histidine from 5-phospho-alpha-D-ribose 1-diphosphate: step 5/9. Functionally, IGPS catalyzes the conversion of PRFAR and glutamine to IGP, AICAR and glutamate. The HisF subunit catalyzes the cyclization activity that produces IGP and AICAR from PRFAR using the ammonia provided by the HisH subunit. The protein is Imidazole glycerol phosphate synthase subunit HisF of Burkholderia vietnamiensis (strain G4 / LMG 22486) (Burkholderia cepacia (strain R1808)).